We begin with the raw amino-acid sequence, 259 residues long: Undecaprenyl-diphosphatase 3 (259 aa).

Helical transmembrane passes span 1-21, 39-59, 71-91, 99-119, 133-153, 174-194, 208-228, and 239-259; these read MNWL…FLPI, AGLF…FIYY, FSKL…IGLL, ISKT…FLYM, ITYK…FPAI, AYFS…LQFV, SLIV…SWMI, and FAYY…TDVF.

It belongs to the UppP family.

It is found in the cell membrane. It carries out the reaction di-trans,octa-cis-undecaprenyl diphosphate + H2O = di-trans,octa-cis-undecaprenyl phosphate + phosphate + H(+). Catalyzes the dephosphorylation of undecaprenyl diphosphate (UPP). Confers resistance to bacitracin. In Bacillus cereus (strain ATCC 14579 / DSM 31 / CCUG 7414 / JCM 2152 / NBRC 15305 / NCIMB 9373 / NCTC 2599 / NRRL B-3711), this protein is Undecaprenyl-diphosphatase 3.